Here is a 316-residue protein sequence, read N- to C-terminus: 4-hydroxy-3-methylbut-2-enyl diphosphate reductase (316 aa).

Cys18 contacts [4Fe-4S] cluster. His47 and His80 together coordinate (2E)-4-hydroxy-3-methylbut-2-enyl diphosphate. Residues His47 and His80 each coordinate dimethylallyl diphosphate. His47 and His80 together coordinate isopentenyl diphosphate. Residue Cys102 participates in [4Fe-4S] cluster binding. (2E)-4-hydroxy-3-methylbut-2-enyl diphosphate is bound at residue His130. His130 provides a ligand contact to dimethylallyl diphosphate. Isopentenyl diphosphate is bound at residue His130. The Proton donor role is filled by Glu132. Position 171 (Thr171) interacts with (2E)-4-hydroxy-3-methylbut-2-enyl diphosphate. Cys201 serves as a coordination point for [4Fe-4S] cluster. Positions 229, 230, 231, and 274 each coordinate (2E)-4-hydroxy-3-methylbut-2-enyl diphosphate. Ser229, Ser230, Asn231, and Ser274 together coordinate dimethylallyl diphosphate. The isopentenyl diphosphate site is built by Ser229, Ser230, Asn231, and Ser274.

The protein belongs to the IspH family. The cofactor is [4Fe-4S] cluster.

It carries out the reaction isopentenyl diphosphate + 2 oxidized [2Fe-2S]-[ferredoxin] + H2O = (2E)-4-hydroxy-3-methylbut-2-enyl diphosphate + 2 reduced [2Fe-2S]-[ferredoxin] + 2 H(+). It catalyses the reaction dimethylallyl diphosphate + 2 oxidized [2Fe-2S]-[ferredoxin] + H2O = (2E)-4-hydroxy-3-methylbut-2-enyl diphosphate + 2 reduced [2Fe-2S]-[ferredoxin] + 2 H(+). It participates in isoprenoid biosynthesis; dimethylallyl diphosphate biosynthesis; dimethylallyl diphosphate from (2E)-4-hydroxy-3-methylbutenyl diphosphate: step 1/1. Its pathway is isoprenoid biosynthesis; isopentenyl diphosphate biosynthesis via DXP pathway; isopentenyl diphosphate from 1-deoxy-D-xylulose 5-phosphate: step 6/6. Functionally, catalyzes the conversion of 1-hydroxy-2-methyl-2-(E)-butenyl 4-diphosphate (HMBPP) into a mixture of isopentenyl diphosphate (IPP) and dimethylallyl diphosphate (DMAPP). Acts in the terminal step of the DOXP/MEP pathway for isoprenoid precursor biosynthesis. This chain is 4-hydroxy-3-methylbut-2-enyl diphosphate reductase, found in Ruegeria sp. (strain TM1040) (Silicibacter sp.).